Consider the following 198-residue polypeptide: Na(+)-translocating NADH-quinone reductase subunit E (198 aa).

The next 6 helical transmembrane spans lie at 11–31, 35–55, 77–97, 110–130, 140–160, and 176–196; these read AVFIENMALSFFLGMCTFLAV, VSTAFGLGIAVTFVLGIAVPV, FLNFITFIGVIAGLVQILEMV, GIFLPLIAVNCAIFGGVSFMV, IVYGFGSGLGWMLAIVALAGL, and LGITFISVGLMALGFMSFSGI.

It belongs to the NqrDE/RnfAE family. Composed of six subunits; NqrA, NqrB, NqrC, NqrD, NqrE and NqrF.

The protein localises to the cell inner membrane. It carries out the reaction a ubiquinone + n Na(+)(in) + NADH + H(+) = a ubiquinol + n Na(+)(out) + NAD(+). Its function is as follows. NQR complex catalyzes the reduction of ubiquinone-1 to ubiquinol by two successive reactions, coupled with the transport of Na(+) ions from the cytoplasm to the periplasm. NqrA to NqrE are probably involved in the second step, the conversion of ubisemiquinone to ubiquinol. The chain is Na(+)-translocating NADH-quinone reductase subunit E from Haemophilus influenzae (strain 86-028NP).